A 438-amino-acid polypeptide reads, in one-letter code: Glyceraldehyde-3-phosphate dehydrogenase B, chloroplastic (438 aa).

The N-terminal 53 residues, C1–A53, are a transit peptide targeting the chloroplast. NADP(+)-binding positions include R64–I65, D88, and R133. D-glyceraldehyde 3-phosphate-binding positions include S207–T209, T238, R253, T266–G267, and R289. The active-site Nucleophile is the C208. NADP(+) is bound at residue N372.

This sequence belongs to the glyceraldehyde-3-phosphate dehydrogenase family. In terms of assembly, tetramer of either four A chains (GAPDH 2) or two A and two B chains (GAPDH 1).

The protein localises to the plastid. The protein resides in the chloroplast. It carries out the reaction D-glyceraldehyde 3-phosphate + phosphate + NADP(+) = (2R)-3-phospho-glyceroyl phosphate + NADPH + H(+). It participates in carbohydrate biosynthesis; Calvin cycle. This is Glyceraldehyde-3-phosphate dehydrogenase B, chloroplastic (GAPB) from Nicotiana tabacum (Common tobacco).